The primary structure comprises 219 residues: 2-C-methyl-D-erythritol 4-phosphate cytidylyltransferase (219 aa).

This sequence belongs to the IspD/TarI cytidylyltransferase family. IspD subfamily.

It catalyses the reaction 2-C-methyl-D-erythritol 4-phosphate + CTP + H(+) = 4-CDP-2-C-methyl-D-erythritol + diphosphate. The protein operates within isoprenoid biosynthesis; isopentenyl diphosphate biosynthesis via DXP pathway; isopentenyl diphosphate from 1-deoxy-D-xylulose 5-phosphate: step 2/6. In terms of biological role, catalyzes the formation of 4-diphosphocytidyl-2-C-methyl-D-erythritol from CTP and 2-C-methyl-D-erythritol 4-phosphate (MEP). In Bacteroides thetaiotaomicron (strain ATCC 29148 / DSM 2079 / JCM 5827 / CCUG 10774 / NCTC 10582 / VPI-5482 / E50), this protein is 2-C-methyl-D-erythritol 4-phosphate cytidylyltransferase.